The sequence spans 532 residues: Spore coat protein SP85 (532 aa).

A signal peptide spans 1 to 19 (MRLLSVLLIGFLCLAGTYA). Asparagine 47 is a glycosylation site (N-linked (GlcNAc...) asparagine). The disordered stretch occupies residues 197 to 265 (TQSPTQPPTQ…PTQPPTQPPV (69 aa)). Positions 201–263 (TQPPTQPPTY…YPPTQPPTQP (63 aa)) are enriched in pro residues. The Follistatin-like 1 domain maps to 267–289 (DCSTLECPEGFHCEIVNNRRTCV). The segment at 297–320 (THPPTQSPTYPPTQPPTQPPTYPP) is disordered. 3 Follistatin-like domains span residues 335–359 (SCDN…ARCV), 400–423 (TCDQ…VFCV), and 430–452 (TCKQ…LHCV).

In terms of assembly, binds to cotE. In terms of processing, O-glycosylated.

It is found in the spore wall. Required for incorporation of cotE into the spore coat and for the formation of the outer layer. Has a cross-bridging function between cellulose and other coat proteins. This is Spore coat protein SP85 (pspB) from Dictyostelium discoideum (Social amoeba).